A 222-amino-acid chain; its full sequence is Phosphoenolpyruvate guanylyltransferase (222 aa).

3 residues coordinate phosphoenolpyruvate: threonine 134, glycine 150, and serine 153.

Belongs to the CofC family.

It carries out the reaction phosphoenolpyruvate + GTP + H(+) = enolpyruvoyl-2-diphospho-5'-guanosine + diphosphate. It participates in cofactor biosynthesis; coenzyme F420 biosynthesis. In terms of biological role, guanylyltransferase that catalyzes the activation of phosphoenolpyruvate (PEP) as enolpyruvoyl-2-diphospho-5'-guanosine, via the condensation of PEP with GTP. It is involved in the biosynthesis of coenzyme F420, a hydride carrier cofactor. The chain is Phosphoenolpyruvate guanylyltransferase from Roseiflexus sp. (strain RS-1).